The chain runs to 101 residues: uncharacterized protein (101 aa).

The signal sequence occupies residues 1 to 19 (MKFKYLSTPLLFSALLFSA). Cys20 is lipidated: N-palmitoyl cysteine. Cys20 is lipidated: S-diacylglycerol cysteine.

This sequence belongs to the MG439/MG440 family.

It localises to the cell membrane. This is an uncharacterized protein from Mycoplasma pneumoniae (strain ATCC 29342 / M129 / Subtype 1) (Mycoplasmoides pneumoniae).